The chain runs to 330 residues: Alpha/beta hydrolase domain-containing protein VTE7 (330 aa).

The 232-residue stretch at 84 to 315 (VVLLHCFDSS…GHLPHVENPK (232 aa)) folds into the AB hydrolase-1 domain. Ser157 functions as the Nucleophile in the catalytic mechanism. Active-site charge relay system residues include Asp279 and His307.

This sequence belongs to the AB hydrolase superfamily.

Its subcellular location is the plastid. It is found in the chloroplast envelope. In terms of biological role, hydrolase involved in tocopherol (vitamin E) biosynthesis. Releases prenyl alcohols from chlorophyll biosynthetic intermediates, which are then converted to the corresponding diphosphates for tocopherol biosynthesis. Provides most of the phytol from chlorophyll for tocopherol biosynthesis in seeds. In Arabidopsis thaliana (Mouse-ear cress), this protein is Alpha/beta hydrolase domain-containing protein VTE7.